We begin with the raw amino-acid sequence, 227 residues long: ATP-dependent Clp protease proteolytic subunit (227 aa).

Serine 120 functions as the Nucleophile in the catalytic mechanism. Histidine 145 is an active-site residue.

This sequence belongs to the peptidase S14 family. Fourteen ClpP subunits assemble into 2 heptameric rings which stack back to back to give a disk-like structure with a central cavity, resembling the structure of eukaryotic proteasomes.

It is found in the cytoplasm. The enzyme catalyses Hydrolysis of proteins to small peptides in the presence of ATP and magnesium. alpha-casein is the usual test substrate. In the absence of ATP, only oligopeptides shorter than five residues are hydrolyzed (such as succinyl-Leu-Tyr-|-NHMec, and Leu-Tyr-Leu-|-Tyr-Trp, in which cleavage of the -Tyr-|-Leu- and -Tyr-|-Trp bonds also occurs).. Cleaves peptides in various proteins in a process that requires ATP hydrolysis. Has a chymotrypsin-like activity. Plays a major role in the degradation of misfolded proteins. In Rickettsia bellii (strain RML369-C), this protein is ATP-dependent Clp protease proteolytic subunit.